A 373-amino-acid polypeptide reads, in one-letter code: Molybdenum import ATP-binding protein ModC (373 aa).

The 237-residue stretch at L4–D240 folds into the ABC transporter domain. Residue G38–S45 participates in ATP binding. The region spanning A299 to R369 is the Mop domain.

It belongs to the ABC transporter superfamily. Molybdate importer (TC 3.A.1.8) family. In terms of assembly, the complex is composed of two ATP-binding proteins (ModC), two transmembrane proteins (ModB) and a solute-binding protein (ModA).

The protein localises to the cell inner membrane. The enzyme catalyses molybdate(out) + ATP + H2O = molybdate(in) + ADP + phosphate + H(+). Part of the ABC transporter complex ModABC involved in molybdenum import. Responsible for energy coupling to the transport system. This is Molybdenum import ATP-binding protein ModC from Rhodopseudomonas palustris (strain ATCC BAA-98 / CGA009).